We begin with the raw amino-acid sequence, 425 residues long: Formyl-CoA:oxalate CoA-transferase (425 aa).

Residues Gln-17–Ser-18, Arg-38, Leu-72–Lys-75, Asn-96–Gly-98, Arg-104, and Lys-136–Glu-139 contribute to the CoA site. The active-site Nucleophile is Asp-168. Substrate is bound at residue Gly-247 to Gln-249.

It belongs to the CoA-transferase III family. Frc subfamily. Homodimer.

The enzyme catalyses formyl-CoA + oxalate = oxalyl-CoA + formate. It functions in the pathway metabolic intermediate degradation; oxalate degradation; CO(2) and formate from oxalate: step 1/2. Involved in the catabolism of oxalate and in the adapatation to low pH via the induction of the oxalate-dependent acid tolerance response (ATR). Catalyzes the transfer of the CoA moiety from formyl-CoA to oxalate. In Rhodopseudomonas palustris (strain HaA2), this protein is Formyl-CoA:oxalate CoA-transferase.